The primary structure comprises 721 residues: BBSome complex member BBS2 (721 aa).

The stretch at 325–369 forms a coiled coil; the sequence is RGNLMDTSAEQDLIRELSQKKQNLLLELRNYEENAKAELASPLNE.

In terms of assembly, part of BBSome complex, that contains BBS1, BBS2, BBS4, BBS5, BBS7, BBS8/TTC8, BBS9 and BBIP10. Interacts (via C-terminus) with BBS7. Interacts (via coiled coil domain) with MKKS. Interacts with CCDC28B and ALDOB. Interacts with DLEC1. In terms of tissue distribution, widely expressed.

The protein resides in the cell projection. It localises to the cilium membrane. It is found in the cytoplasm. Its subcellular location is the cytoskeleton. The protein localises to the microtubule organizing center. The protein resides in the centrosome. It localises to the centriolar satellite. In terms of biological role, the BBSome complex is thought to function as a coat complex required for sorting of specific membrane proteins to the primary cilia. The BBSome complex is required for ciliogenesis but is dispensable for centriolar satellite function. This ciliogenic function is mediated in part by the Rab8 GDP/GTP exchange factor, which localizes to the basal body and contacts the BBSome. Rab8(GTP) enters the primary cilium and promotes extension of the ciliary membrane. Firstly the BBSome associates with the ciliary membrane and binds to RAB3IP/Rabin8, the guanosyl exchange factor (GEF) for Rab8 and then the Rab8-GTP localizes to the cilium and promotes docking and fusion of carrier vesicles to the base of the ciliary membrane. The BBSome complex, together with the LTZL1, controls SMO ciliary trafficking and contributes to the sonic hedgehog (SHH) pathway regulation. Required for proper BBSome complex assembly and its ciliary localization. In Homo sapiens (Human), this protein is BBSome complex member BBS2.